The sequence spans 735 residues: Probable ATP-dependent RNA helicase DHR2 (735 aa).

A compositionally biased stretch (polar residues) spans 1–13 (MAANSNSRVASNH). A disordered region spans residues 1–29 (MAANSNSRVASNHTSKKQKVRRNIHPFTN). Over residues 14-24 (TSKKQKVRRNI) the composition is skewed to basic residues. Residues 91–257 (MSYIESNPVT…FNNAPILFVE (167 aa)) enclose the Helicase ATP-binding domain. Position 104 to 111 (104 to 111 (GETGSGKS)) interacts with ATP. The short motif at 203 to 206 (DEAH) is the DEAH box element. The 195-residue stretch at 262 to 456 (DVKQYYLKAP…SPVLMLKRYG (195 aa)) folds into the Helicase C-terminal domain.

The protein belongs to the DEAD box helicase family. DEAH subfamily. As to quaternary structure, interacts with NOP19. Interacts with UBP10.

It is found in the nucleus. It localises to the nucleolus. The catalysed reaction is ATP + H2O = ADP + phosphate + H(+). Its function is as follows. Probable ATP-binding RNA helicase. Required for 18S rRNA synthesis. This is Probable ATP-dependent RNA helicase DHR2 (DHR2) from Saccharomyces cerevisiae (strain ATCC 204508 / S288c) (Baker's yeast).